Reading from the N-terminus, the 263-residue chain is Ribonuclease HII (263 aa).

The RNase H type-2 domain occupies 71-262; sequence QAIAGIDEVG…VKSMCCNSTN (192 aa). Positions 77, 78, and 172 each coordinate a divalent metal cation.

This sequence belongs to the RNase HII family. It depends on Mn(2+) as a cofactor. Requires Mg(2+) as cofactor.

The protein resides in the cytoplasm. It carries out the reaction Endonucleolytic cleavage to 5'-phosphomonoester.. Functionally, endonuclease that specifically degrades the RNA of RNA-DNA hybrids. In Streptococcus pyogenes serotype M2 (strain MGAS10270), this protein is Ribonuclease HII.